A 379-amino-acid polypeptide reads, in one-letter code: Cytochrome b (379 aa).

Transmembrane regions (helical) follow at residues 33–53 (FGSL…FLAM), 77–98 (WLIR…FLHV), 113–133 (WNIG…GYVL), 178–198 (FFAF…VHLL), 226–246 (IKDV…VLFS), 288–308 (LGGV…PILH), 320–340 (LSQC…WIGG), and 347–367 (FITI…LALP). The heme b site is built by histidine 83 and histidine 97. The heme b site is built by histidine 182 and histidine 196.

This sequence belongs to the cytochrome b family. As to quaternary structure, the cytochrome bc1 complex contains 11 subunits: 3 respiratory subunits (MT-CYB, CYC1 and UQCRFS1), 2 core proteins (UQCRC1 and UQCRC2) and 6 low-molecular weight proteins (UQCRH/QCR6, UQCRB/QCR7, UQCRQ/QCR8, UQCR10/QCR9, UQCR11/QCR10 and a cleavage product of UQCRFS1). This cytochrome bc1 complex then forms a dimer. Requires heme b as cofactor.

The protein localises to the mitochondrion inner membrane. Its function is as follows. Component of the ubiquinol-cytochrome c reductase complex (complex III or cytochrome b-c1 complex) that is part of the mitochondrial respiratory chain. The b-c1 complex mediates electron transfer from ubiquinol to cytochrome c. Contributes to the generation of a proton gradient across the mitochondrial membrane that is then used for ATP synthesis. In Sciurus niger (Eastern fox squirrel), this protein is Cytochrome b (MT-CYB).